Reading from the N-terminus, the 360-residue chain is Geranylgeranyl pyrophosphate synthase 3, chloroplastic (360 aa).

The transit peptide at 1 to 39 directs the protein to the chloroplast; the sequence is MATTVHLSSFSLFIQSRGRRDNSISSVKSLKKRTGLSPS. The interval 24–54 is disordered; the sequence is ISSVKSLKKRTGLSPSSALTSQGGRDMIPPE. Polar residues predominate over residues 36–46; sequence LSPSSALTSQG. Isopentenyl diphosphate-binding residues include Lys-106, Arg-109, and His-138. Residues Asp-145 and Asp-151 each coordinate Mg(2+). Arg-156 lines the dimethylallyl diphosphate pocket. Arg-157 serves as a coordination point for isopentenyl diphosphate. Dimethylallyl diphosphate is bound by residues Lys-245, Thr-246, Gln-283, Lys-300, and Lys-310.

This sequence belongs to the FPP/GGPP synthase family. Monomer. It depends on Mg(2+) as a cofactor. As to expression, mainly expressed in roots.

Its subcellular location is the plastid. The protein localises to the chloroplast. The catalysed reaction is isopentenyl diphosphate + dimethylallyl diphosphate = (2E)-geranyl diphosphate + diphosphate. It catalyses the reaction isopentenyl diphosphate + (2E)-geranyl diphosphate = (2E,6E)-farnesyl diphosphate + diphosphate. It carries out the reaction isopentenyl diphosphate + (2E,6E)-farnesyl diphosphate = (2E,6E,10E)-geranylgeranyl diphosphate + diphosphate. It participates in isoprenoid biosynthesis; farnesyl diphosphate biosynthesis; farnesyl diphosphate from geranyl diphosphate and isopentenyl diphosphate: step 1/1. It functions in the pathway isoprenoid biosynthesis; geranyl diphosphate biosynthesis; geranyl diphosphate from dimethylallyl diphosphate and isopentenyl diphosphate: step 1/1. Its pathway is isoprenoid biosynthesis; geranylgeranyl diphosphate biosynthesis; geranylgeranyl diphosphate from farnesyl diphosphate and isopentenyl diphosphate: step 1/1. Catalyzes the trans-addition of the three molecules of IPP onto DMAPP to form geranylgeranyl pyrophosphate. The sequence is that of Geranylgeranyl pyrophosphate synthase 3, chloroplastic (GGPP3) from Arabidopsis thaliana (Mouse-ear cress).